The chain runs to 347 residues: Microfibril-associated glycoprotein 3 (347 aa).

A signal peptide spans Met1–Leu22. Residues Glu23–Asp139 are Extracellular-facing. Residues Asn31, Asn36, Asn63, and Asn103 are each glycosylated (N-linked (GlcNAc...) asparagine). The 84-residue stretch at Ala47–Thr130 folds into the Ig-like C2-type domain. Cys68 and Cys117 form a disulfide bridge. Residues Met140–Val160 traverse the membrane as a helical segment. The Cytoplasmic portion of the chain corresponds to Thr161–Glu347. Residues Asn280 to Glu347 are disordered. Residues Val311–Ser331 are compositionally biased toward polar residues.

Glycosylated.

The protein localises to the cell membrane. Functionally, component of the elastin-associated microfibrils. The sequence is that of Microfibril-associated glycoprotein 3 (Mfap3) from Rattus norvegicus (Rat).